An 82-amino-acid polypeptide reads, in one-letter code: Small ribosomal subunit protein uS17c (82 aa).

Belongs to the universal ribosomal protein uS17 family. Part of the 30S ribosomal subunit.

It localises to the plastid. The protein localises to the chloroplast. Functionally, one of the primary rRNA binding proteins, it binds specifically to the 5'-end of 16S ribosomal RNA. This chain is Small ribosomal subunit protein uS17c (rps17), found in Cyanidioschyzon merolae (strain NIES-3377 / 10D) (Unicellular red alga).